A 308-amino-acid polypeptide reads, in one-letter code: Homoserine kinase (308 aa).

95–105 is a binding site for ATP; that stretch reads PQSRGLGSSAA.

It belongs to the GHMP kinase family. Homoserine kinase subfamily.

The protein resides in the cytoplasm. It catalyses the reaction L-homoserine + ATP = O-phospho-L-homoserine + ADP + H(+). It functions in the pathway amino-acid biosynthesis; L-threonine biosynthesis; L-threonine from L-aspartate: step 4/5. Functionally, catalyzes the ATP-dependent phosphorylation of L-homoserine to L-homoserine phosphate. In Corynebacterium jeikeium (strain K411), this protein is Homoserine kinase.